We begin with the raw amino-acid sequence, 270 residues long: Aliphatic sulfonates import ATP-binding protein SsuB 3 (270 aa).

An ABC transporter domain is found at 17–238 (LAVRKLKKAF…VRGSHRLAAL (222 aa)). Residue 49–56 (GRSGCGKS) coordinates ATP.

It belongs to the ABC transporter superfamily. Aliphatic sulfonates importer (TC 3.A.1.17.2) family. As to quaternary structure, the complex is composed of two ATP-binding proteins (SsuB), two transmembrane proteins (SsuC) and a solute-binding protein (SsuA).

The protein localises to the cell inner membrane. It catalyses the reaction ATP + H2O + aliphatic sulfonate-[sulfonate-binding protein]Side 1 = ADP + phosphate + aliphatic sulfonateSide 2 + [sulfonate-binding protein]Side 1.. Its function is as follows. Part of the ABC transporter complex SsuABC involved in aliphatic sulfonates import. Responsible for energy coupling to the transport system. In Pseudomonas syringae pv. syringae (strain B728a), this protein is Aliphatic sulfonates import ATP-binding protein SsuB 3.